Consider the following 94-residue polypeptide: uncharacterized protein (94 aa).

This is an uncharacterized protein from Homo sapiens (Human).